A 467-amino-acid chain; its full sequence is Cell division protein FtsP (467 aa).

A signal peptide (tat-type signal) is located at residues 1-28 (MRSLTRRDFLKSGILASSLSCIPQSVMA).

It belongs to the FtsP family. Predicted to be exported by the Tat system. The position of the signal peptide cleavage has not been experimentally proven.

The protein localises to the periplasm. Functionally, cell division protein that is required for growth during stress conditions. May be involved in protecting or stabilizing the divisomal assembly under conditions of stress. In Histophilus somni (strain 2336) (Haemophilus somnus), this protein is Cell division protein FtsP.